The chain runs to 272 residues: NAD kinase (272 aa).

Asp50 acts as the Proton acceptor in catalysis. NAD(+) is bound by residues 50-51 (DG), 126-127 (NE), Arg152, Asp154, 165-170 (TAYNKS), and Ala189.

This sequence belongs to the NAD kinase family. It depends on a divalent metal cation as a cofactor.

It is found in the cytoplasm. It carries out the reaction NAD(+) + ATP = ADP + NADP(+) + H(+). Involved in the regulation of the intracellular balance of NAD and NADP, and is a key enzyme in the biosynthesis of NADP. Catalyzes specifically the phosphorylation on 2'-hydroxyl of the adenosine moiety of NAD to yield NADP. The sequence is that of NAD kinase from Streptococcus pneumoniae (strain 70585).